We begin with the raw amino-acid sequence, 875 residues long: MSKSTAEIRQAFLDFFHSKGHQVVSSSSLVPNNDPTLLFTNAGMNQFKDVFLGLDKRAYSRATTSQRCVRAGGKHNDLENVGYTARHHTFFEMLGNFSFGDYFKHDAINFAWELLTSEQWFNLPKEKLWVTVYETDDEAYNIWANEVGVPHERIIRIGDNKGGAFASDNFWQMGDTGPCGPCSEIFFDHGDHIWGGPPGSAEEDGDRYIEIWNIVFMQFNRQSDGTMLPLPKPSVDTGMGLERIAAVLQHVNSNYEIDLFRDLIAAVADVTGATDLSSKSLRVIADHIRSCAFLISDGVIPSNENRGYVLRRIIRRAIRHGNMLGAKETFFYKLVAPLIAVMGPAAAELKQQQAMVEQVLKTEEEQFARTLERGLALLDDELSKLTGDTLDGETAFRLYDTYGFPVDLTADVCRERNLKVDEAGFEQAMEAQRRRARESSGFGADYNSLIRVDSASQFSGYDHVQQHATVTALFRNGEAVDEIHAGEEAVVVLNRTPFYGESGGQVGDKGELKNATATFSVTDTQKYGQAIGHVGILTTGTLRVNHSVEALVDVVRRNRIRLNHSATHLLHAALRNVLGEHVAQKGSLVNDKYLRFDFSHFEAMKPEQIRLVEDLVNEQIRRNMPVQTEVMELDAAKEKGAMALFGEKYDDQVRVLTMGDFSTELCGGTHASRTGDIGLFRILTESGTAAGIRRIEAVTGEGAIALLHQQSDLLQDVAHLVKGDIHNLADKVRAVLDRSKMLERELQQLKDQQAAQESASLSSSAKLINGVKLLVSQLDNVEPKMLRTMVDDLKNQLGSAIIVLATTTDDKVSLIVGVTKDLTGKVKAGELIADIAQQVGGKGGGRPDMAQAGGTDVQALPAALASVEAWVASRM.

Residues His564, His568, Cys666, and His670 each coordinate Zn(2+).

It belongs to the class-II aminoacyl-tRNA synthetase family. As to quaternary structure, homotetramer. The cofactor is Zn(2+).

The protein localises to the cytoplasm. The enzyme catalyses tRNA(Ala) + L-alanine + ATP = L-alanyl-tRNA(Ala) + AMP + diphosphate. Its function is as follows. Catalyzes the attachment of alanine to tRNA(Ala) in a two-step reaction: alanine is first activated by ATP to form Ala-AMP and then transferred to the acceptor end of tRNA(Ala). Also edits incorrectly charged Ser-tRNA(Ala) and Gly-tRNA(Ala) via its editing domain. The chain is Alanine--tRNA ligase from Yersinia pseudotuberculosis serotype O:1b (strain IP 31758).